Here is a 597-residue protein sequence, read N- to C-terminus: Sulfite reductase [NADPH] flavoprotein alpha-component (597 aa).

Residues 62 to 200 enclose the Flavodoxin-like domain; that stretch reads VTVLSASQTG…TADKWIQDVV (139 aa). FMN contacts are provided by residues 68–73, 115–118, and 151–160; these read SQTGNA, STQG, and LGDTSYPNFC. Residues 232-446 form the FAD-binding FR-type domain; sequence ENPYTAKLIT…VEPNDNFRLP (215 aa). FAD is bound by residues Thr320, Asn354, 384–387, 402–404, and 417–420; these read RLYS, SVG, and GVAS. Residues 517 to 518, 523 to 527, and Asp559 each bind NADP(+); these read SR and KIYVQ. Residue Tyr597 participates in FAD binding.

This sequence belongs to the NADPH-dependent sulphite reductase flavoprotein subunit CysJ family. The protein in the N-terminal section; belongs to the flavodoxin family. It in the C-terminal section; belongs to the flavoprotein pyridine nucleotide cytochrome reductase family. In terms of assembly, alpha(8)-beta(8). The alpha component is a flavoprotein, the beta component is a hemoprotein. Requires FAD as cofactor. It depends on FMN as a cofactor.

The catalysed reaction is hydrogen sulfide + 3 NADP(+) + 3 H2O = sulfite + 3 NADPH + 4 H(+). Its pathway is sulfur metabolism; hydrogen sulfide biosynthesis; hydrogen sulfide from sulfite (NADPH route): step 1/1. Functionally, component of the sulfite reductase complex that catalyzes the 6-electron reduction of sulfite to sulfide. This is one of several activities required for the biosynthesis of L-cysteine from sulfate. The flavoprotein component catalyzes the electron flow from NADPH -&gt; FAD -&gt; FMN to the hemoprotein component. The protein is Sulfite reductase [NADPH] flavoprotein alpha-component of Mannheimia succiniciproducens (strain KCTC 0769BP / MBEL55E).